We begin with the raw amino-acid sequence, 543 residues long: GPI mannosyltransferase 4 (543 aa).

5 consecutive transmembrane segments (helical) span residues 5–25 (TYLL…YLHP), 98–118 (VMFL…VPFA), 176–196 (LAFI…FLAI), 213–233 (PVSL…AVLV), and 353–373 (LFLA…GIYH). A glycan (N-linked (GlcNAc...) asparagine) is linked at N428.

Belongs to the glycosyltransferase 22 family. PIGZ subfamily.

It localises to the endoplasmic reticulum membrane. It participates in glycolipid biosynthesis; glycosylphosphatidylinositol-anchor biosynthesis. Functionally, alpha-1,2-mannosyltransferase involved in glycosylphosphatidylinositol-anchor biosynthesis. Transfers a fourth mannose to trimannosyl-GPIs during GPI precursor assembly. The presence of a fourth mannose in GPI is essential in fungi. This chain is GPI mannosyltransferase 4 (smp3), found in Aspergillus oryzae (strain ATCC 42149 / RIB 40) (Yellow koji mold).